We begin with the raw amino-acid sequence, 741 residues long: Phosphoribosylformylglycinamidine synthase subunit PurL (741 aa).

The active site involves His-53. 2 residues coordinate ATP: Tyr-56 and Lys-95. Residue Glu-97 coordinates Mg(2+). Substrate is bound by residues 98–101 (SHNH) and Arg-120. His-99 (proton acceptor) is an active-site residue. Residue Asp-121 coordinates Mg(2+). Gln-244 is a substrate binding site. Asp-274 is a Mg(2+) binding site. Residue 318–320 (ESQ) participates in substrate binding. Residues Asp-501 and Gly-538 each contribute to the ATP site. Asn-539 is a binding site for Mg(2+). Position 541 (Ser-541) interacts with substrate.

It belongs to the FGAMS family. As to quaternary structure, monomer. Part of the FGAM synthase complex composed of 1 PurL, 1 PurQ and 2 PurS subunits.

It localises to the cytoplasm. It carries out the reaction N(2)-formyl-N(1)-(5-phospho-beta-D-ribosyl)glycinamide + L-glutamine + ATP + H2O = 2-formamido-N(1)-(5-O-phospho-beta-D-ribosyl)acetamidine + L-glutamate + ADP + phosphate + H(+). Its pathway is purine metabolism; IMP biosynthesis via de novo pathway; 5-amino-1-(5-phospho-D-ribosyl)imidazole from N(2)-formyl-N(1)-(5-phospho-D-ribosyl)glycinamide: step 1/2. Part of the phosphoribosylformylglycinamidine synthase complex involved in the purines biosynthetic pathway. Catalyzes the ATP-dependent conversion of formylglycinamide ribonucleotide (FGAR) and glutamine to yield formylglycinamidine ribonucleotide (FGAM) and glutamate. The FGAM synthase complex is composed of three subunits. PurQ produces an ammonia molecule by converting glutamine to glutamate. PurL transfers the ammonia molecule to FGAR to form FGAM in an ATP-dependent manner. PurS interacts with PurQ and PurL and is thought to assist in the transfer of the ammonia molecule from PurQ to PurL. The sequence is that of Phosphoribosylformylglycinamidine synthase subunit PurL from Ligilactobacillus salivarius (strain UCC118) (Lactobacillus salivarius).